A 38-amino-acid polypeptide reads, in one-letter code: MIPIKRSSRRWKKKGRMRWKWYKKRLRRLKRERKRARS.

This sequence belongs to the eukaryotic ribosomal protein eS32 family. In terms of assembly, component of the small ribosomal subunit (SSU).

The polypeptide is Small ribosomal subunit protein eS32 (rpl41e) (Methanocaldococcus jannaschii (strain ATCC 43067 / DSM 2661 / JAL-1 / JCM 10045 / NBRC 100440) (Methanococcus jannaschii)).